The primary structure comprises 389 residues: MAEPDPSHPLETQAGKVQEAQDSDSDSEGGAAGGEADMDFLRNLFSQTLSLGSQKERLLDELTLEGVARYMQSERCRRVICLVGAGISTSAGIPDFRSPSTGLYDNLEKYHLPYPEAIFEISYFKKHPEPFFALAKELYPGQFKPTICHYFMRLLKDKGLLLRCYTQNIDTLERIAGLEQEDLVEAHGTFYTSHCVSASCRHEYPLSWMKEKIFSEVTPKCEDCQSLVKPDIVFFGESLPARFFSCMQSDFLKVDLLLVMGTSLQVQPFASLISKAPLSTPRLLINKEKAGQSDPFLGMIMGLGGGMDFDSKKAYRDVAWLGECDQGCLALAELLGWKKELEDLVRREHASIDAQSGAGVPNPSTSASPKKSPPPAKDEARTTEREKPQ.

The disordered stretch occupies residues 1–34 (MAEPDPSHPLETQAGKVQEAQDSDSDSEGGAAGG). Alanine 2 bears the N-acetylalanine mark. Phosphoserine occurs at positions 23, 25, and 27. A Nuclear export signal motif is present at residues 41-51 (LRNLFSQTLSL). Serine 53 is subject to Phosphoserine. Positions 57–338 (RLLDELTLEG…LALAELLGWK (282 aa)) constitute a Deacetylase sirtuin-type domain. Residues 85 to 89 (AGIST) and 95 to 97 (DFR) contribute to the NAD(+) site. Serine 100 is modified (phosphoserine). 167 to 170 (QNID) lines the NAD(+) pocket. Histidine 187 (proton acceptor) is an active-site residue. 2 residues coordinate Zn(2+): cysteine 195 and cysteine 200. A Phosphoserine modification is found at serine 207. Zn(2+) contacts are provided by cysteine 221 and cysteine 224. NAD(+)-binding positions include 262-263 (TS), 286-288 (NKE), and cysteine 324. The segment at 351 to 389 (SIDAQSGAGVPNPSTSASPKKSPPPAKDEARTTEREKPQ) is disordered. Low complexity predominate over residues 361 to 370 (PNPSTSASPK). Serine 368 carries the post-translational modification Phosphoserine; by CDK2 and CDK5. Serine 372 carries the post-translational modification Phosphoserine. Basic and acidic residues predominate over residues 376–389 (AKDEARTTEREKPQ).

It belongs to the sirtuin family. Class I subfamily. In terms of assembly, interacts with CDC20, FOXO3 and FZR1. Associates with microtubules in primary cortical mature neurons. Homotrimer. Isoform 1 and isoform 2 interact (via both phosphorylated, unphosphorylated, active or inactive forms) with HDAC6; the interaction is necessary for the complex to interact with alpha-tubulin, suggesting that these proteins belong to a large complex that deacetylates the cytoskeleton. Interacts with FOXO1; the interaction is disrupted upon serum-starvation or oxidative stress, leading to increased level of acetylated FOXO1 and induction of autophagy. Interacts with RELA; the interaction occurs in the cytoplasm and is increased in a TNF-alpha-dependent manner. Interacts with HOXA10; the interaction is direct. Interacts with YWHAB and YWHAG; the interactions occur in a AKT-dependent manner and increase SIRT2-dependent TP53 deacetylation. Interacts with MAPK1/ERK2 and MAPK3/ERK1; the interactions increase SIRT2 stability and deacetylation activity. Interacts (phosphorylated form) with KMT5A isoform 2; the interaction is direct, stimulates KMT5A-mediated methyltransferase activity on histone at 'Lys-20' (H4K20me1) and is increased in a H(2)O(2)-induced oxidative stress-dependent manner. Interacts with G6PD; the interaction is enhanced by H(2)O(2) treatment. Interacts with a G1/S-specific cyclin E-CDK2 complex. Interacts with AURKA, CDK5R1 (p35 form) and CDK5 and HIF1A. Isoform 1, isoform 2 and isoform 5 interact (via C-terminus region) with EP300. Interacts with the tRNA ligase SARS1; recruited to the VEGFA promoter via interaction with SARS1. Interacts with BEX4; negatively regulates alpha-tubulin deacetylation by SIRT2. Zn(2+) serves as cofactor. In terms of processing, phosphorylated at phosphoserine and phosphothreonine. Phosphorylated at Ser-368 by a mitotic kinase CDK1/cyclin B at the G2/M transition; phosphorylation regulates the delay in cell-cycle progression. Phosphorylated at Ser-368 by a mitotic kinase G1/S-specific cyclin E/Cdk2 complex; phosphorylation inactivates SIRT2-mediated alpha-tubulin deacetylation and thereby negatively regulates cell adhesion, cell migration and neurite outgrowth during neuronal differentiation. Phosphorylated by cyclin A/Cdk2 and p35-Cdk5 complexes and to a lesser extent by the cyclin D3/Cdk4 and cyclin B/Cdk1, in vitro. Dephosphorylated at Ser-368 by CDC14A and CDC14B around early anaphase. Acetylated by EP300; acetylation leads both to the decreased of SIRT2-mediated alpha-tubulin deacetylase activity and SIRT2-mediated down-regulation of TP53 transcriptional activity. Post-translationally, ubiquitinated. As to expression, isoform 1 is expressed in heart, liver and skeletal muscle, weakly expressed in the cortex. Isoform 2 is strongly expressed in the cortex, weakly expressed in heart and liver. Weakly expressed in several malignancies including breast, liver, brain, kidney and prostate cancers compared to normal tissues. Weakly expressed in glioma cell lines compared to normal brain tissues (at protein level). Widely expressed. Highly expressed in heart, brain and skeletal muscle, while it is weakly expressed in placenta and lung. Down-regulated in many gliomas suggesting that it may act as a tumor suppressor gene in human gliomas possibly through the regulation of microtubule network.

It localises to the nucleus. It is found in the cytoplasm. Its subcellular location is the perinuclear region. The protein localises to the cytoskeleton. The protein resides in the microtubule organizing center. It localises to the centrosome. It is found in the centriole. Its subcellular location is the spindle. The protein localises to the midbody. The protein resides in the chromosome. It localises to the perikaryon. It is found in the cell projection. Its subcellular location is the growth cone. The protein localises to the myelin membrane. It catalyses the reaction N(6)-acetyl-L-lysyl-[protein] + NAD(+) + H2O = 2''-O-acetyl-ADP-D-ribose + nicotinamide + L-lysyl-[protein]. The enzyme catalyses N(6)-tetradecanoyl-L-lysyl-[protein] + NAD(+) + H2O = 2''-O-tetradecanoyl-ADP-D-ribose + nicotinamide + L-lysyl-[protein]. The catalysed reaction is N(6)-hexadecanoyl-L-lysyl-[protein] + NAD(+) + H2O = 2''-O-hexadecanoyl-ADP-D-ribose + nicotinamide + L-lysyl-[protein]. Inhibited by Sirtinol, A3 and M15 small molecules. Inhibited by nicotinamide. Inhibited by a macrocyclic peptide inhibitor S2iL5. Inhibited by EP300-induced acetylation. Its function is as follows. NAD-dependent protein deacetylase, which deacetylates internal lysines on histone and alpha-tubulin as well as many other proteins such as key transcription factors. Participates in the modulation of multiple and diverse biological processes such as cell cycle control, genomic integrity, microtubule dynamics, cell differentiation, metabolic networks, and autophagy. Plays a major role in the control of cell cycle progression and genomic stability. Functions in the antephase checkpoint preventing precocious mitotic entry in response to microtubule stress agents, and hence allowing proper inheritance of chromosomes. Positively regulates the anaphase promoting complex/cyclosome (APC/C) ubiquitin ligase complex activity by deacetylating CDC20 and FZR1, then allowing progression through mitosis. Associates both with chromatin at transcriptional start sites (TSSs) and enhancers of active genes. Plays a role in cell cycle and chromatin compaction through epigenetic modulation of the regulation of histone H4 'Lys-20' methylation (H4K20me1) during early mitosis. Specifically deacetylates histone H4 at 'Lys-16' (H4K16ac) between the G2/M transition and metaphase enabling H4K20me1 deposition by KMT5A leading to ulterior levels of H4K20me2 and H4K20me3 deposition throughout cell cycle, and mitotic S-phase progression. Deacetylates KMT5A modulating KMT5A chromatin localization during the mitotic stress response. Also deacetylates histone H3 at 'Lys-57' (H3K56ac) during the mitotic G2/M transition. Upon bacterium Listeria monocytogenes infection, deacetylates 'Lys-18' of histone H3 in a receptor tyrosine kinase MET- and PI3K/Akt-dependent manner, thereby inhibiting transcriptional activity and promoting late stages of listeria infection. During oocyte meiosis progression, may deacetylate histone H4 at 'Lys-16' (H4K16ac) and alpha-tubulin, regulating spindle assembly and chromosome alignment by influencing microtubule dynamics and kinetochore function. Deacetylates histone H4 at 'Lys-16' (H4K16ac) at the VEGFA promoter and thereby contributes to regulate expression of VEGFA, a key regulator of angiogenesis. Deacetylates alpha-tubulin at 'Lys-40' and hence controls neuronal motility, oligodendroglial cell arbor projection processes and proliferation of non-neuronal cells. Phosphorylation at Ser-368 by a G1/S-specific cyclin E-CDK2 complex inactivates SIRT2-mediated alpha-tubulin deacetylation, negatively regulating cell adhesion, cell migration and neurite outgrowth during neuronal differentiation. Deacetylates PARD3 and participates in the regulation of Schwann cell peripheral myelination formation during early postnatal development and during postinjury remyelination. Involved in several cellular metabolic pathways. Plays a role in the regulation of blood glucose homeostasis by deacetylating and stabilizing phosphoenolpyruvate carboxykinase PCK1 activity in response to low nutrient availability. Acts as a key regulator in the pentose phosphate pathway (PPP) by deacetylating and activating the glucose-6-phosphate G6PD enzyme, and therefore, stimulates the production of cytosolic NADPH to counteract oxidative damage. Maintains energy homeostasis in response to nutrient deprivation as well as energy expenditure by inhibiting adipogenesis and promoting lipolysis. Attenuates adipocyte differentiation by deacetylating and promoting FOXO1 interaction to PPARG and subsequent repression of PPARG-dependent transcriptional activity. Plays a role in the regulation of lysosome-mediated degradation of protein aggregates by autophagy in neuronal cells. Deacetylates FOXO1 in response to oxidative stress or serum deprivation, thereby negatively regulating FOXO1-mediated autophagy. Deacetylates a broad range of transcription factors and co-regulators regulating target gene expression. Deacetylates transcriptional factor FOXO3 stimulating the ubiquitin ligase SCF(SKP2)-mediated FOXO3 ubiquitination and degradation. Deacetylates HIF1A and therefore promotes HIF1A degradation and inhibition of HIF1A transcriptional activity in tumor cells in response to hypoxia. Deacetylates RELA in the cytoplasm inhibiting NF-kappaB-dependent transcription activation upon TNF-alpha stimulation. Inhibits transcriptional activation by deacetylating p53/TP53 and EP300. Also deacetylates EIF5A. Functions as a negative regulator on oxidative stress-tolerance in response to anoxia-reoxygenation conditions. Plays a role as tumor suppressor. In addition to protein deacetylase activity, also has activity toward long-chain fatty acyl groups and mediates protein-lysine demyristoylation and depalmitoylation of target proteins, such as ARF6 and KRAS, thereby regulating their association with membranes. In terms of biological role, deacetylates EP300, alpha-tubulin and histone H3 and H4. Lacks deacetylation activity, at least toward known SIRT2 targets. The chain is NAD-dependent protein deacetylase sirtuin-2 (SIRT2) from Homo sapiens (Human).